The following is a 274-amino-acid chain: HTH-type transcriptional regulator GadX (274 aa).

Residues 145–242 enclose the HTH araC/xylS-type domain; that stretch reads TRVCTVINNN…GMTPTEYQER (98 aa). DNA-binding regions (H-T-H motif) lie at residues 162 to 183 and 209 to 232; these read ARIA…REEG and IKRV…RNYY.

In terms of assembly, homodimer.

In terms of biological role, positively regulates the expression of about fifteen genes involved in acid resistance such as gadA, gadB and gadC. Depending on the conditions (growth phase and medium), can repress gadW. The protein is HTH-type transcriptional regulator GadX (gadX) of Escherichia coli O6:H1 (strain CFT073 / ATCC 700928 / UPEC).